Consider the following 138-residue polypeptide: NADH dehydrogenase [ubiquinone] 1 alpha subcomplex subunit N7BM (138 aa).

The protein belongs to the complex I NDUFA12 subunit family. As to quaternary structure, complex I is composed of 42 different subunits.

Its subcellular location is the mitochondrion inner membrane. Its function is as follows. Accessory subunit of the mitochondrial membrane respiratory chain NADH dehydrogenase (Complex I), that is believed not to be involved in catalysis. Complex I functions in the transfer of electrons from NADH to the respiratory chain. The immediate electron acceptor for the enzyme is believed to be ubiquinone. The chain is NADH dehydrogenase [ubiquinone] 1 alpha subcomplex subunit N7BM from Yarrowia lipolytica (strain CLIB 122 / E 150) (Yeast).